Consider the following 118-residue polypeptide: Small ribosomal subunit protein uS13 (118 aa).

Positions 91–118 (HRRGLPVRGQRTKTNARTRKGPRKPIKK) are disordered.

Belongs to the universal ribosomal protein uS13 family. Part of the 30S ribosomal subunit. Forms a loose heterodimer with protein S19. Forms two bridges to the 50S subunit in the 70S ribosome.

Located at the top of the head of the 30S subunit, it contacts several helices of the 16S rRNA. In the 70S ribosome it contacts the 23S rRNA (bridge B1a) and protein L5 of the 50S subunit (bridge B1b), connecting the 2 subunits; these bridges are implicated in subunit movement. Contacts the tRNAs in the A and P-sites. This is Small ribosomal subunit protein uS13 from Sodalis glossinidius (strain morsitans).